A 103-amino-acid chain; its full sequence is Small ribosomal subunit protein uS10 (103 aa).

This sequence belongs to the universal ribosomal protein uS10 family. In terms of assembly, part of the 30S ribosomal subunit.

Functionally, involved in the binding of tRNA to the ribosomes. This Xanthomonas campestris pv. campestris (strain B100) protein is Small ribosomal subunit protein uS10.